We begin with the raw amino-acid sequence, 491 residues long: Chromosomal replication initiator protein DnaA (491 aa).

Residues 1–69 (MTTWDKCLKK…TIQECHGNDL (69 aa)) are domain I, interacts with DnaA modulators. The interval 69-154 (LIIEYSNKKF…KEDEEYSFGL (86 aa)) is domain II. Positions 155–371 (PLKEKYVFDS…GALNRVLTTS (217 aa)) are domain III, AAA+ region. The ATP site is built by Gly-199, Gly-201, Lys-202, and Thr-203. Residues 372–491 (KFNHKDPTIE…YELLLDKISR (120 aa)) form a domain IV, binds dsDNA region.

Belongs to the DnaA family. Oligomerizes as a right-handed, spiral filament on DNA at oriC.

It localises to the cytoplasm. In terms of biological role, plays an essential role in the initiation and regulation of chromosomal replication. ATP-DnaA binds to the origin of replication (oriC) to initiate formation of the DNA replication initiation complex once per cell cycle. Binds the DnaA box (a 9 base pair repeat at the origin) and separates the double-stranded (ds)DNA. Forms a right-handed helical filament on oriC DNA; dsDNA binds to the exterior of the filament while single-stranded (ss)DNA is stabiized in the filament's interior. The ATP-DnaA-oriC complex binds and stabilizes one strand of the AT-rich DNA unwinding element (DUE), permitting loading of DNA polymerase. After initiation quickly degrades to an ADP-DnaA complex that is not apt for DNA replication. Binds acidic phospholipids. The sequence is that of Chromosomal replication initiator protein DnaA from Francisella tularensis subsp. novicida (strain U112).